We begin with the raw amino-acid sequence, 334 residues long: L-lactate dehydrogenase A chain (334 aa).

Residues 30–58 (GQVG…LEDK) and Arg100 each bind NAD(+). Residues Arg107, Asn139, and Arg170 each coordinate substrate. Asn139 serves as a coordination point for NAD(+). Residue His194 is the Proton acceptor of the active site. Thr249 serves as a coordination point for substrate.

It belongs to the LDH/MDH superfamily. LDH family. Homotetramer.

The protein localises to the cytoplasm. The catalysed reaction is (S)-lactate + NAD(+) = pyruvate + NADH + H(+). Its pathway is fermentation; pyruvate fermentation to lactate; (S)-lactate from pyruvate: step 1/1. Its function is as follows. Interconverts simultaneously and stereospecifically pyruvate and lactate with concomitant interconversion of NADH and NAD(+). The sequence is that of L-lactate dehydrogenase A chain (ldha) from Xenopus laevis (African clawed frog).